Consider the following 37-residue polypeptide: Large ribosomal subunit protein bL36 (37 aa).

Belongs to the bacterial ribosomal protein bL36 family.

This Treponema denticola (strain ATCC 35405 / DSM 14222 / CIP 103919 / JCM 8153 / KCTC 15104) protein is Large ribosomal subunit protein bL36.